The following is a 373-amino-acid chain: 3 beta-hydroxysteroid dehydrogenase/Delta 5--&gt;4-isomerase type 3 (373 aa).

Residue Tyr-155 is the Proton acceptor of the active site. Lys-159 lines the NAD(+) pocket. A helical transmembrane segment spans residues 288–308; sequence VPILYWLAFLLETVSFLLSPI.

Belongs to the 3-beta-HSD family. As to expression, liver and kidney. Greater expression in liver.

It localises to the endoplasmic reticulum membrane. It is found in the mitochondrion membrane. It catalyses the reaction a 3beta-hydroxy-Delta(5)-steroid + NAD(+) = a 3-oxo-Delta(5)-steroid + NADH + H(+). It carries out the reaction a 3-oxo-Delta(5)-steroid = a 3-oxo-Delta(4)-steroid. It participates in lipid metabolism; steroid biosynthesis. Its function is as follows. 3-beta-HSD is a bifunctional enzyme, that catalyzes the oxidative conversion of Delta(5)-ene-3-beta-hydroxy steroid, and the oxidative conversion of ketosteroids. The 3-beta-HSD enzymatic system plays a crucial role in the biosynthesis of all classes of hormonal steroids. The polypeptide is 3 beta-hydroxysteroid dehydrogenase/Delta 5--&gt;4-isomerase type 3 (Hsd3b3) (Mus musculus (Mouse)).